Reading from the N-terminus, the 458-residue chain is tRNA modification GTPase MnmE (458 aa).

The (6S)-5-formyl-5,6,7,8-tetrahydrofolate site is built by Arg22, Glu84, and Arg123. The TrmE-type G domain occupies 220 to 379 (GIATAIIGRP…LEKAIADLFF (160 aa)). Asn230 provides a ligand contact to K(+). Residues 230-235 (NVGKSS), 249-255 (TDIAGTT), and 274-277 (DTAG) each bind GTP. Ser234 lines the Mg(2+) pocket. K(+) contacts are provided by Thr249, Ile251, and Thr254. A Mg(2+)-binding site is contributed by Thr255. Lys458 contributes to the (6S)-5-formyl-5,6,7,8-tetrahydrofolate binding site.

Belongs to the TRAFAC class TrmE-Era-EngA-EngB-Septin-like GTPase superfamily. TrmE GTPase family. As to quaternary structure, homodimer. Heterotetramer of two MnmE and two MnmG subunits. It depends on K(+) as a cofactor.

The protein resides in the cytoplasm. Exhibits a very high intrinsic GTPase hydrolysis rate. Involved in the addition of a carboxymethylaminomethyl (cmnm) group at the wobble position (U34) of certain tRNAs, forming tRNA-cmnm(5)s(2)U34. This Bacillus cereus (strain ATCC 14579 / DSM 31 / CCUG 7414 / JCM 2152 / NBRC 15305 / NCIMB 9373 / NCTC 2599 / NRRL B-3711) protein is tRNA modification GTPase MnmE.